The chain runs to 376 residues: Chaperone protein DnaJ (376 aa).

One can recognise a J domain in the interval 5-70; sequence DYYEVLGAAK…QKRAAYDQFG (66 aa). Residues 134-212 form a CR-type zinc finger; that stretch reads GCDEKIRIPT…CGGQGRVQNT (79 aa). Residues C147, C150, C164, C167, C186, C189, C200, and C203 each contribute to the Zn(2+) site. 4 CXXCXGXG motif repeats span residues 147–154, 164–171, 186–193, and 200–207; these read CDVCHGSG, CTTCGGVG, CPTCKGEG, and CGNCGGQG.

This sequence belongs to the DnaJ family. As to quaternary structure, homodimer. Zn(2+) serves as cofactor.

It is found in the cytoplasm. Its function is as follows. Participates actively in the response to hyperosmotic and heat shock by preventing the aggregation of stress-denatured proteins and by disaggregating proteins, also in an autonomous, DnaK-independent fashion. Unfolded proteins bind initially to DnaJ; upon interaction with the DnaJ-bound protein, DnaK hydrolyzes its bound ATP, resulting in the formation of a stable complex. GrpE releases ADP from DnaK; ATP binding to DnaK triggers the release of the substrate protein, thus completing the reaction cycle. Several rounds of ATP-dependent interactions between DnaJ, DnaK and GrpE are required for fully efficient folding. Also involved, together with DnaK and GrpE, in the DNA replication of plasmids through activation of initiation proteins. The protein is Chaperone protein DnaJ of Alcanivorax borkumensis (strain ATCC 700651 / DSM 11573 / NCIMB 13689 / SK2).